The primary structure comprises 1423 residues: uncharacterized protein (1423 aa).

A signal peptide spans 1 to 28 (MTSSVRLAFLATLLLLLPLEAQIQQANS). Over 29 to 1321 (ANVNQNVGQQ…RSREKQNFLT (1293 aa)) the chain is Extracellular. 6 N-linked (GlcNAc...) asparagine glycosylation sites follow: asparagine 94, asparagine 306, asparagine 355, asparagine 483, asparagine 666, and asparagine 903. Residues 184–347 (SFFGQSASKA…GRYMFRVDDV (164 aa)) enclose the NIDO domain. The 181-residue stretch at 638–818 (VKKKSLEMCH…FRCQMFYWRR (181 aa)) folds into the AMOP domain. A helical transmembrane segment spans residues 1322–1342 (WLAIIGGIFGVLVFVILIFLC). At 1343–1423 (CWIVKQKKKG…EDLHGLKTSV (81 aa)) the chain is on the cytoplasmic side. Residues 1364 to 1401 (SRSSMTGSRGGKKYPIHESEPLNEKRFDADTYRDDDFY) are disordered. Residues 1378-1401 (PIHESEPLNEKRFDADTYRDDDFY) show a composition bias toward basic and acidic residues.

It is found in the membrane. This is an uncharacterized protein from Caenorhabditis elegans.